The primary structure comprises 288 residues: MELLCCEVDPVRRAVPDRNLLEDRVLQNLLTIEERYLPQCSYFKCVQKDIQPYMRRMVATWMLEVCEEQKCEEEVFPLAMNYLDRFLAGVPTPKTHLQLLGAVCMFLASKLKETIPLTAEKLCIYTDNSVKPQELLEWELVVLGKLKWNLAAVTPHDFIEHILRKLPQQKEKLSLIRKHAQTFIALCATDFKFAMYPPSMIATGSVGAAICGLQQDEEVNALTCDALTELLTKITHTDVDCLKACQEQIEAVLLNSLQQFRQEQHNGSKSVEDPDQATTPTDVRDVDL.

The Cyclin N-terminal domain maps to Leu-26–Ala-151. A disordered region spans residues Gln-264–Leu-288. Position 270 is a phosphoserine (Ser-270). Thr-279 carries the phosphothreonine modification.

It belongs to the cyclin family. Cyclin D subfamily. In terms of assembly, interacts with either CDK4 or CDK6 protein kinase to form a serine/threonine kinase holoenzyme complex. The cyclin subunit imparts substrate specificity to the complex. In terms of processing, phosphorylation at Thr-279 by MAP kinases is required for ubiquitination and degradation by the DCX(AMBRA1) complex. Ubiquitinated by the DCX(AMBRA1) complex during the transition from G1 to S cell phase, leading to its degradation: ubiquitination is dependent on Thr-279 phosphorylation. The DCX(AMBRA1) complex represents the major regulator of CCND2 stability during the G1/S transition. Polyubiquitinated by the SCF(FBXL2) complex, leading to proteasomal degradation.

It localises to the nucleus. Its subcellular location is the cytoplasm. The protein localises to the nucleus membrane. Regulatory component of the cyclin D2-CDK4 (DC) complex that phosphorylates and inhibits members of the retinoblastoma (RB) protein family including RB1 and regulates the cell-cycle during G(1)/S transition. Phosphorylation of RB1 allows dissociation of the transcription factor E2F from the RB/E2F complex and the subsequent transcription of E2F target genes which are responsible for the progression through the G(1) phase. Hypophosphorylates RB1 in early G(1) phase. Cyclin D-CDK4 complexes are major integrators of various mitogenenic and antimitogenic signals. The sequence is that of G1/S-specific cyclin-D2 (Ccnd2) from Rattus norvegicus (Rat).